We begin with the raw amino-acid sequence, 327 residues long: Taste receptor type 2 member 102 (327 aa).

Residues methionine 1–serine 7 are Extracellular-facing. A helical membrane pass occupies residues phenylalanine 8–valine 28. Topologically, residues leucine 29–lysine 46 are cytoplasmic. A helical membrane pass occupies residues isoleucine 47–threonine 67. Residues serine 68–threonine 87 lie on the Extracellular side of the membrane. The chain crosses the membrane as a helical span at residues tryptophan 88–leucine 108. Over arginine 109–arginine 124 the chain is Cytoplasmic. A helical membrane pass occupies residues leucine 125 to threonine 145. Residues glutamine 146 to asparagine 179 are Extracellular-facing. Residues asparagine 159 and asparagine 179 are each glycosylated (N-linked (GlcNAc...) asparagine). A helical transmembrane segment spans residues leucine 180 to phenylalanine 200. At serine 201–arginine 229 the chain is on the cytoplasmic side. Residues isoleucine 230–isoleucine 250 traverse the membrane as a helical segment. The Extracellular portion of the chain corresponds to alanine 251–aspartate 260. The chain crosses the membrane as a helical span at residues isoleucine 261–glycine 281. Residues asparagine 282–serine 327 lie on the Cytoplasmic side of the membrane.

It belongs to the G-protein coupled receptor T2R family.

It localises to the membrane. In terms of biological role, putative taste receptor which may play a role in the perception of bitterness. In Rattus norvegicus (Rat), this protein is Taste receptor type 2 member 102.